We begin with the raw amino-acid sequence, 246 residues long: MSALPIATNHYFDTHFDRPGVKLLPNEFYTTSEDIVLMTVLGSCVAACLHDPVSGIGGMNHFMLPDDGADAGAAASESMRYGAYAMEVLINELIKAGGRRERFEAKVFGGAAVLAGMTTINIGDRNADFVRRYLALERIRITAEDLQGVHPRKVAFMPRTGRAMVKKLRLQVPGVAEREAALAREAVRASAARARAKVELFAAPRPSAPPPARPRIELFGARSGGAGVQPAVQKAASPYAANLSRK.

The tract at residues 225–246 (GAGVQPAVQKAASPYAANLSRK) is disordered.

The protein belongs to the CheD family.

The catalysed reaction is L-glutaminyl-[protein] + H2O = L-glutamyl-[protein] + NH4(+). In terms of biological role, probably deamidates glutamine residues to glutamate on methyl-accepting chemotaxis receptors (MCPs), playing an important role in chemotaxis. The sequence is that of Probable chemoreceptor glutamine deamidase CheD from Burkholderia vietnamiensis (strain G4 / LMG 22486) (Burkholderia cepacia (strain R1808)).